The chain runs to 444 residues: Protein giant-lens (444 aa).

Positions 1–24 (MPTTLMLLPCMLLLLLTAAAVAVG) are cleaved as a signal peptide. 2 Two-fingered domain 1 part repeats span residues 123–165 (RDVR…CRCP) and 285–307 (CPSS…YKMC). Intrachain disulfides connect C141-C162, C147-C285, C164-C307, C316-C341, C343-C370, C378-C405, C384-C413, and C407-C440. 2 Two-fingered domain repeats span residues 316–370 (CTHF…LFAC) and 378–444 (CQRK…MAND). N-linked (GlcNAc...) asparagine glycosylation occurs at N333.

Interacts with spi. During embryogenesis, expression is in a segmental pattern in the ectoderm and in the nervous system. In the eye imaginal disks, expression in photoreceptor cells begins a few rows posterior to the morphogenetic furrow. Also expressed in the wing disk. In the adult, expression is seen in the retina and lamina.

The protein resides in the secreted. In terms of biological role, regulates cell determination; development of ommatidia and optic lobe. Is a signaling molecule involved in the process of axon pathfinding in the eye. Part of the Ras pathway regulating programmed cell death in pupal eyes; activated by lozenge (lz). Antagonist for the Egfr receptor (gurken). Inhibits Egfr signaling without interacting directly with the receptor, but instead by sequestering the Egfr-activating ligand spitz (spi). The chain is Protein giant-lens (aos) from Drosophila melanogaster (Fruit fly).